The following is a 129-amino-acid chain: VVSQADARGEFLSTEQLDALTAVVARRLDVVNRITSNASAIVTNAARSLFEEQPNLIAPGGNAYTNRRRDMEIILRYVTYAAIAGDASVLDDRRETYQALGTPGASVAVGVGKGDCSSLVSEVASYFDR.

N62 bears the N4-methylasparagine mark. C116 lines the (2R,3E)-phycocyanobilin pocket.

The protein belongs to the phycobiliprotein family. Heterodimer of an alpha and a beta subunit, which further assembles into trimers and the trimers into hexamers. In terms of processing, two isomers exist. Post-translationally, contains two covalently linked bilin chromophores.

The protein resides in the cellular thylakoid membrane. Functionally, light-harvesting photosynthetic bile pigment-protein from the phycobiliprotein complex (phycobilisome, PBS). Phycocyanin is the major phycobiliprotein in the PBS rod. The sequence is that of C-phycocyanin beta subunit from Aphanizomenon flos-aquae.